A 378-amino-acid chain; its full sequence is Alcohol dehydrogenase class-3 (378 aa).

A1 carries the N-acetylalanine modification. C46 lines the Zn(2+) pocket. Position 47 (H47) interacts with NAD(+). An alcohol-binding residues include T48 and H68. Residues H68, E69, C98, C101, C104, C112, and C176 each coordinate Zn(2+). NAD(+) is bound by residues 201 to 206 (GLGTVG), D225, K230, 294 to 296 (VGV), 319 to 321 (TAF), and R371.

This sequence belongs to the zinc-containing alcohol dehydrogenase family. Class-III subfamily. Homodimer. It depends on Zn(2+) as a cofactor.

It localises to the cytoplasm. The catalysed reaction is a primary alcohol + NAD(+) = an aldehyde + NADH + H(+). It catalyses the reaction a secondary alcohol + NAD(+) = a ketone + NADH + H(+). The enzyme catalyses S-(hydroxymethyl)glutathione + NADP(+) = S-formylglutathione + NADPH + H(+). It carries out the reaction S-(hydroxymethyl)glutathione + NAD(+) = S-formylglutathione + NADH + H(+). Class-III ADH is remarkably ineffective in oxidizing ethanol, but it readily catalyzes the oxidation of long-chain primary alcohols and the oxidation of S-(hydroxymethyl) glutathione. The chain is Alcohol dehydrogenase class-3 from Pisum sativum (Garden pea).